The sequence spans 125 residues: RxLR effector protein Avh6 (125 aa).

A signal peptide spans 1–25 (MRLSSTTFVVLAAVLLASGTAVSKA). Residues 48-70 (RFLRSHHTEDGEAKLSNYDNEER) carry the RxLR-dEER motif.

This sequence belongs to the RxLR effector family.

The protein resides in the secreted. Its subcellular location is the host cell. Functionally, effector that suppresses plant defense responses during the early stages of pathogen infection. Suppresses cell death induced by effectors and PAMPs in plant hosts. Triggers a hypersensitive response (HR) in the presence of Rps1d. Suppresses BAX-induced cell death and enhan,ced P.capsici infection in Nicotiana benthamiana. Also suppresses effector-triggered immunity induction by associating with Avr1b and Rps1b, suggesting a role in suppressing plant immunity. The protein is RxLR effector protein Avh6 of Phytophthora sojae (strain P6497) (Soybean stem and root rot agent).